A 312-amino-acid polypeptide reads, in one-letter code: Methionyl-tRNA formyltransferase (312 aa).

112 to 115 (SLLP) contacts (6S)-5,6,7,8-tetrahydrofolate.

This sequence belongs to the Fmt family.

The enzyme catalyses L-methionyl-tRNA(fMet) + (6R)-10-formyltetrahydrofolate = N-formyl-L-methionyl-tRNA(fMet) + (6S)-5,6,7,8-tetrahydrofolate + H(+). Attaches a formyl group to the free amino group of methionyl-tRNA(fMet). The formyl group appears to play a dual role in the initiator identity of N-formylmethionyl-tRNA by promoting its recognition by IF2 and preventing the misappropriation of this tRNA by the elongation apparatus. The sequence is that of Methionyl-tRNA formyltransferase from Magnetococcus marinus (strain ATCC BAA-1437 / JCM 17883 / MC-1).